The sequence spans 268 residues: Hemin import ATP-binding protein HmuV (268 aa).

The region spanning 5 to 242 (IEARHLSKRA…ETIRDIFEID (238 aa)) is the ABC transporter domain. 37–44 (GPNGAGKS) provides a ligand contact to ATP.

The protein belongs to the ABC transporter superfamily. Heme (hemin) importer (TC 3.A.1.14.5) family. In terms of assembly, the complex is composed of two ATP-binding proteins (HmuV), two transmembrane proteins (HmuU) and a solute-binding protein (HmuT).

The protein resides in the cell inner membrane. Its function is as follows. Part of the ABC transporter complex HmuTUV involved in hemin import. Responsible for energy coupling to the transport system. The polypeptide is Hemin import ATP-binding protein HmuV (Bradyrhizobium diazoefficiens (strain JCM 10833 / BCRC 13528 / IAM 13628 / NBRC 14792 / USDA 110)).